Reading from the N-terminus, the 260-residue chain is Pyridoxine 5'-phosphate synthase (260 aa).

The 3-amino-2-oxopropyl phosphate site is built by Asn-10 and Arg-21. His-46 (proton acceptor) is an active-site residue. 1-deoxy-D-xylulose 5-phosphate contacts are provided by Arg-48 and His-53. Glu-76 functions as the Proton acceptor in the catalytic mechanism. Thr-113 contacts 1-deoxy-D-xylulose 5-phosphate. His-204 acts as the Proton donor in catalysis. 3-amino-2-oxopropyl phosphate-binding positions include Asp-205 and 227–228; that span reads GH.

It belongs to the PNP synthase family. As to quaternary structure, homooctamer; tetramer of dimers.

It is found in the cytoplasm. The catalysed reaction is 3-amino-2-oxopropyl phosphate + 1-deoxy-D-xylulose 5-phosphate = pyridoxine 5'-phosphate + phosphate + 2 H2O + H(+). The protein operates within cofactor biosynthesis; pyridoxine 5'-phosphate biosynthesis; pyridoxine 5'-phosphate from D-erythrose 4-phosphate: step 5/5. Functionally, catalyzes the complicated ring closure reaction between the two acyclic compounds 1-deoxy-D-xylulose-5-phosphate (DXP) and 3-amino-2-oxopropyl phosphate (1-amino-acetone-3-phosphate or AAP) to form pyridoxine 5'-phosphate (PNP) and inorganic phosphate. The protein is Pyridoxine 5'-phosphate synthase of Xylella fastidiosa (strain M12).